The primary structure comprises 211 residues: MLTIALSKGRILDDTLPLLAAAGIEPTENPDKSRKLIIPTTQDDVRLLIVRATDVPTYVEHGAADLGVAGKDVLMEYGGQGLYEPLDLQIAKCKLMTAGKVGAPEPKGRLRVATKFVNVAKRYYAEQGRQVDIIKLYGSMELAPLVGLADKIIDVVDTGNTLRANGLEPQELIATISSRLIVNKASMKMQHGRIQALIETLRGAVEARHQG.

This sequence belongs to the ATP phosphoribosyltransferase family. Short subfamily. In terms of assembly, heteromultimer composed of HisG and HisZ subunits.

It is found in the cytoplasm. It catalyses the reaction 1-(5-phospho-beta-D-ribosyl)-ATP + diphosphate = 5-phospho-alpha-D-ribose 1-diphosphate + ATP. The protein operates within amino-acid biosynthesis; L-histidine biosynthesis; L-histidine from 5-phospho-alpha-D-ribose 1-diphosphate: step 1/9. Catalyzes the condensation of ATP and 5-phosphoribose 1-diphosphate to form N'-(5'-phosphoribosyl)-ATP (PR-ATP). Has a crucial role in the pathway because the rate of histidine biosynthesis seems to be controlled primarily by regulation of HisG enzymatic activity. This chain is ATP phosphoribosyltransferase, found in Ectopseudomonas mendocina (strain ymp) (Pseudomonas mendocina).